The primary structure comprises 435 residues: 5-methylthioadenosine/S-adenosylhomocysteine deaminase (435 aa).

Zn(2+) contacts are provided by histidine 65 and histidine 67. Substrate is bound by residues glutamate 94, arginine 150, and histidine 189. A Zn(2+)-binding site is contributed by histidine 216. Glutamate 219 and aspartate 304 together coordinate substrate. Position 304 (aspartate 304) interacts with Zn(2+).

This sequence belongs to the metallo-dependent hydrolases superfamily. MTA/SAH deaminase family. It depends on Zn(2+) as a cofactor.

It catalyses the reaction S-adenosyl-L-homocysteine + H2O + H(+) = S-inosyl-L-homocysteine + NH4(+). It carries out the reaction S-methyl-5'-thioadenosine + H2O + H(+) = S-methyl-5'-thioinosine + NH4(+). In terms of biological role, catalyzes the deamination of 5-methylthioadenosine and S-adenosyl-L-homocysteine into 5-methylthioinosine and S-inosyl-L-homocysteine, respectively. Is also able to deaminate adenosine. The polypeptide is 5-methylthioadenosine/S-adenosylhomocysteine deaminase (Bacillus cereus (strain AH187)).